A 639-amino-acid chain; its full sequence is Threonine--tRNA ligase (639 aa).

The 62-residue stretch at 1 to 62 folds into the TGS domain; the sequence is MYQLTLPDKS…ETDANIEVLT (62 aa). Positions 246–537 are catalytic; sequence DHRKIGKELD…LIEHYEGKFP (292 aa). The Zn(2+) site is built by C337, H388, and H514.

Belongs to the class-II aminoacyl-tRNA synthetase family. Homodimer. Zn(2+) is required as a cofactor.

The protein resides in the cytoplasm. It catalyses the reaction tRNA(Thr) + L-threonine + ATP = L-threonyl-tRNA(Thr) + AMP + diphosphate + H(+). In terms of biological role, catalyzes the attachment of threonine to tRNA(Thr) in a two-step reaction: L-threonine is first activated by ATP to form Thr-AMP and then transferred to the acceptor end of tRNA(Thr). Also edits incorrectly charged L-seryl-tRNA(Thr). The polypeptide is Threonine--tRNA ligase (Leptospira borgpetersenii serovar Hardjo-bovis (strain JB197)).